A 451-amino-acid chain; its full sequence is tRNA modification GTPase MnmE (451 aa).

(6S)-5-formyl-5,6,7,8-tetrahydrofolate contacts are provided by Arg28, Glu85, and Lys124. The TrmE-type G domain maps to 220–373; the sequence is GLYTVLVGPP…LKTRLRTLLL (154 aa). K(+) is bound at residue Asn230. Residues 230–235, 249–255, and 274–277 each bind GTP; these read NVGKSS, TDVPGTT, and DTAG. Ser234 provides a ligand contact to Mg(2+). The K(+) site is built by Thr249, Val251, and Thr254. Residue Thr255 coordinates Mg(2+). Lys451 is a (6S)-5-formyl-5,6,7,8-tetrahydrofolate binding site.

This sequence belongs to the TRAFAC class TrmE-Era-EngA-EngB-Septin-like GTPase superfamily. TrmE GTPase family. Homodimer. Heterotetramer of two MnmE and two MnmG subunits. It depends on K(+) as a cofactor.

The protein resides in the cytoplasm. Its function is as follows. Exhibits a very high intrinsic GTPase hydrolysis rate. Involved in the addition of a carboxymethylaminomethyl (cmnm) group at the wobble position (U34) of certain tRNAs, forming tRNA-cmnm(5)s(2)U34. This Xylella fastidiosa (strain Temecula1 / ATCC 700964) protein is tRNA modification GTPase MnmE.